Consider the following 396-residue polypeptide: Cystathionine beta-lyase (396 aa).

K211 carries the N6-(pyridoxal phosphate)lysine modification.

This sequence belongs to the trans-sulfuration enzymes family. As to quaternary structure, homotetramer. Pyridoxal 5'-phosphate serves as cofactor.

It is found in the cytoplasm. The catalysed reaction is L,L-cystathionine + H2O = L-homocysteine + pyruvate + NH4(+). It catalyses the reaction an S-substituted L-cysteine + H2O = a thiol + pyruvate + NH4(+). It participates in amino-acid biosynthesis; L-methionine biosynthesis via de novo pathway; L-homocysteine from L-cystathionine: step 1/1. Its function is as follows. Catalyzes the cleavage of cystathionine to homocysteine, pyruvate and ammonia during methionine biosynthesis. This Haemophilus influenzae (strain ATCC 51907 / DSM 11121 / KW20 / Rd) protein is Cystathionine beta-lyase (metC).